The sequence spans 85 residues: U4-theraphotoxin-Hhn1a (85 aa).

The N-terminal stretch at Met-1–Ala-22 is a signal peptide. Positions Glu-23–Arg-48 are excised as a propeptide. 3 disulfides stabilise this stretch: Cys-52-Cys-66, Cys-56-Cys-77, and Cys-71-Cys-82.

Belongs to the neurotoxin 12 (Hwtx-2) family. 02 (Hwtx-2) subfamily. In terms of assembly, monomer. Expressed by the venom gland.

It is found in the secreted. Functionally, neurotoxin active on both insects and mammals. This chain is U4-theraphotoxin-Hhn1a, found in Cyriopagopus hainanus (Chinese bird spider).